We begin with the raw amino-acid sequence, 233 residues long: Methylthioribulose-1-phosphate dehydratase (233 aa).

Residue Cys-91 coordinates substrate. His-108 and His-110 together coordinate Zn(2+). The Proton donor/acceptor role is filled by Glu-137. His-194 provides a ligand contact to Zn(2+).

The protein belongs to the aldolase class II family. MtnB subfamily. Zn(2+) is required as a cofactor.

It localises to the cytoplasm. It catalyses the reaction 5-(methylsulfanyl)-D-ribulose 1-phosphate = 5-methylsulfanyl-2,3-dioxopentyl phosphate + H2O. It participates in amino-acid biosynthesis; L-methionine biosynthesis via salvage pathway; L-methionine from S-methyl-5-thio-alpha-D-ribose 1-phosphate: step 2/6. Its function is as follows. Catalyzes the dehydration of methylthioribulose-1-phosphate (MTRu-1-P) into 2,3-diketo-5-methylthiopentyl-1-phosphate (DK-MTP-1-P). The sequence is that of Methylthioribulose-1-phosphate dehydratase from Phaeosphaeria nodorum (strain SN15 / ATCC MYA-4574 / FGSC 10173) (Glume blotch fungus).